The sequence spans 504 residues: Glucose-6-phosphate isomerase (504 aa).

The active-site Proton donor is the glutamate 333. Active-site residues include histidine 364 and lysine 473.

It belongs to the GPI family.

Its subcellular location is the cytoplasm. The enzyme catalyses alpha-D-glucose 6-phosphate = beta-D-fructose 6-phosphate. The protein operates within carbohydrate biosynthesis; gluconeogenesis. Its pathway is carbohydrate degradation; glycolysis; D-glyceraldehyde 3-phosphate and glycerone phosphate from D-glucose: step 2/4. Functionally, catalyzes the reversible isomerization of glucose-6-phosphate to fructose-6-phosphate. This is Glucose-6-phosphate isomerase from Xanthomonas oryzae pv. oryzae (strain KACC10331 / KXO85).